The chain runs to 501 residues: MNFRCSSAPLAELGCDGVALGLFSSSWQQQLAALLPAMAAQLQPLLEQREFKAKGGEKHSFSFPGQQPSLVIISGLGEPDSFDGLALRKAAASLALASRGSNLKALALGLPIEAFAPDQALTALMQGCRLALYKDERFRSENKPSLDPGEIVLQGLASELDQQLAQQEAICQGVMLARELVAAPPNVVNALSLESTARSIADQFGCELTVLDEAACRERGMGAYLAVAQGASIPPRFLHLVIRPQGPVKRKLALVGKGLTFDSGGYNLKVGGSQIELMKFDMGGCGAVLGAARTLAELKLEGLEIHVISAATENMVSAEAIYPGAIVTASNGKTIEINNTDAEGRLTLADALVYACGLEPDAIVDLATLTGACVIALGDEIAGYWSPDDGLAQQLNDAAHRAGEGLWRMPLQSSYKDGLKSGLADMKNTGPRPGGSITAALFLKEFVKPEIPWAHIDIAGPVWSDKGRSTDPSGATGYGVRTLVEWCQAVAADAKEGLSQG.

Residues Lys257 and Asp262 each coordinate Mn(2+). Lys269 is an active-site residue. Asp281, Asp341, and Glu343 together coordinate Mn(2+). Residue Arg345 is part of the active site.

Belongs to the peptidase M17 family. Mn(2+) is required as a cofactor.

It localises to the cytoplasm. It catalyses the reaction Release of an N-terminal amino acid, Xaa-|-Yaa-, in which Xaa is preferably Leu, but may be other amino acids including Pro although not Arg or Lys, and Yaa may be Pro. Amino acid amides and methyl esters are also readily hydrolyzed, but rates on arylamides are exceedingly low.. It carries out the reaction Release of an N-terminal amino acid, preferentially leucine, but not glutamic or aspartic acids.. In terms of biological role, presumably involved in the processing and regular turnover of intracellular proteins. Catalyzes the removal of unsubstituted N-terminal amino acids from various peptides. In Synechococcus sp. (strain RCC307), this protein is Probable cytosol aminopeptidase.